Consider the following 354-residue polypeptide: Transcriptional regulator URE2 (354 aa).

N-acetylmethionine is present on M2. The segment at M2–Q89 is prion domain (PrD). Residues G22 to G42 show a composition bias toward polar residues. Residues G22–N76 are disordered. Over residues V43–N73 the composition is skewed to low complexity. The 85-residue stretch at E112 to T196 folds into the GST N-terminal domain. Residues N124, H151, R164 to V165, and E180 to S181 contribute to the glutathione site. Residues D205–E354 enclose the GST C-terminal domain.

Belongs to the GST superfamily. In terms of assembly, homodimer. Interacts with NNK1.

It is found in the cytoplasm. It catalyses the reaction 2 glutathione + H2O2 = glutathione disulfide + 2 H2O. In terms of biological role, plays an important role in nitrogen catabolite repression. Down-regulates the expression of many genes involved in nitrogen utilization by inhibiting the GATA transcriptional activators GLN3 and GAT1. Under good nitrogen conditions, binds to the phosphorylated forms of GLN3 and GAT1 and sequesters them in the cytoplasm, preventing transcription of genes expressed upon nitrogen limitation. Is also an atypical glutaredoxin without a catalytical cysteine residue. Has glutathione peroxidase and thiol:disulfide oxidoreductase activities in both native and fibrillar form. Also shows insulin disulfide reductase and dehydroascorbic acid reductase (DHAR) activities. This Saccharomyces cerevisiae (strain ATCC 204508 / S288c) (Baker's yeast) protein is Transcriptional regulator URE2 (URE2).